Reading from the N-terminus, the 437-residue chain is Type II methyltransferase M.HgiBI (437 aa).

The region spanning 4-431 (FRFIDLFAGI…KALQCVKLFE (428 aa)) is the SAM-dependent MTase C5-type domain. Residue cysteine 75 is part of the active site.

The protein belongs to the class I-like SAM-binding methyltransferase superfamily. C5-methyltransferase family.

It carries out the reaction a 2'-deoxycytidine in DNA + S-adenosyl-L-methionine = a 5-methyl-2'-deoxycytidine in DNA + S-adenosyl-L-homocysteine + H(+). Functionally, a methylase that recognizes the double-stranded sequence 5'-GGWCC-3', methylates C-? on both strands, and protects the DNA from cleavage by the HgiBI endonuclease. This system is less active than isoschizomeric RM.HgiEI. The chain is Type II methyltransferase M.HgiBI from Herpetosiphon aurantiacus (Herpetosiphon giganteus).